Here is a 195-residue protein sequence, read N- to C-terminus: Large ribosomal subunit protein eL15 (195 aa).

The segment at 174-195 (GHGRLGSAKSRPSIRANGRLRR) is disordered.

Belongs to the eukaryotic ribosomal protein eL15 family.

The chain is Large ribosomal subunit protein eL15 from Picrophilus torridus (strain ATCC 700027 / DSM 9790 / JCM 10055 / NBRC 100828 / KAW 2/3).